The chain runs to 119 residues: Large ribosomal subunit protein uL22 (119 aa).

The protein belongs to the universal ribosomal protein uL22 family. Part of the 50S ribosomal subunit.

In terms of biological role, this protein binds specifically to 23S rRNA; its binding is stimulated by other ribosomal proteins, e.g. L4, L17, and L20. It is important during the early stages of 50S assembly. It makes multiple contacts with different domains of the 23S rRNA in the assembled 50S subunit and ribosome. Its function is as follows. The globular domain of the protein is located near the polypeptide exit tunnel on the outside of the subunit, while an extended beta-hairpin is found that lines the wall of the exit tunnel in the center of the 70S ribosome. The polypeptide is Large ribosomal subunit protein uL22 (Rickettsia prowazekii (strain Madrid E)).